The chain runs to 90 residues: Acylphosphatase (90 aa).

Residues 3–90 (KKQFVVYGIV…HSFGLFSVEH (88 aa)) enclose the Acylphosphatase-like domain. Catalysis depends on residues Arg18 and Asn36.

It belongs to the acylphosphatase family.

The enzyme catalyses an acyl phosphate + H2O = a carboxylate + phosphate + H(+). This chain is Acylphosphatase (acyP), found in Mannheimia succiniciproducens (strain KCTC 0769BP / MBEL55E).